A 353-amino-acid polypeptide reads, in one-letter code: Photosystem II protein D1 (353 aa).

Thr2 carries the post-translational modification N-acetylthreonine. Thr2 is subject to Phosphothreonine. Helical transmembrane passes span 29 to 46 (YIGWFGVLMIPTLLTATS), 118 to 133 (HFLLGVACYMGREWEL), and 142 to 156 (WIAVAYSAPVAAAAA). His118 contacts chlorophyll a. Pheophytin a is bound at residue Tyr126. [CaMn4O5] cluster contacts are provided by Asp170 and Glu189. The chain crosses the membrane as a helical span at residues 197 to 218 (FHMLGVAGVFGGSLFSAMHGSL). A chlorophyll a-binding site is contributed by His198. A quinone contacts are provided by residues His215 and 264–265 (SF). His215 is a Fe cation binding site. His272 serves as a coordination point for Fe cation. A helical transmembrane segment spans residues 274 to 288 (FLAAWPVVGIWFTAL). Residues His332, Glu333, Asp342, and Ala344 each contribute to the [CaMn4O5] cluster site. Residues 345–353 (AVEAPSING) constitute a propeptide that is removed on maturation.

This sequence belongs to the reaction center PufL/M/PsbA/D family. As to quaternary structure, PSII is composed of 1 copy each of membrane proteins PsbA, PsbB, PsbC, PsbD, PsbE, PsbF, PsbH, PsbI, PsbJ, PsbK, PsbL, PsbM, PsbT, PsbX, PsbY, PsbZ, Psb30/Ycf12, at least 3 peripheral proteins of the oxygen-evolving complex and a large number of cofactors. It forms dimeric complexes. The cofactor is The D1/D2 heterodimer binds P680, chlorophylls that are the primary electron donor of PSII, and subsequent electron acceptors. It shares a non-heme iron and each subunit binds pheophytin, quinone, additional chlorophylls, carotenoids and lipids. D1 provides most of the ligands for the Mn4-Ca-O5 cluster of the oxygen-evolving complex (OEC). There is also a Cl(-1) ion associated with D1 and D2, which is required for oxygen evolution. The PSII complex binds additional chlorophylls, carotenoids and specific lipids.. Tyr-161 forms a radical intermediate that is referred to as redox-active TyrZ, YZ or Y-Z. In terms of processing, C-terminally processed by CTPA; processing is essential to allow assembly of the oxygen-evolving complex and thus photosynthetic growth.

It is found in the plastid. Its subcellular location is the chloroplast thylakoid membrane. It catalyses the reaction 2 a plastoquinone + 4 hnu + 2 H2O = 2 a plastoquinol + O2. In terms of biological role, photosystem II (PSII) is a light-driven water:plastoquinone oxidoreductase that uses light energy to abstract electrons from H(2)O, generating O(2) and a proton gradient subsequently used for ATP formation. It consists of a core antenna complex that captures photons, and an electron transfer chain that converts photonic excitation into a charge separation. The D1/D2 (PsbA/PsbD) reaction center heterodimer binds P680, the primary electron donor of PSII as well as several subsequent electron acceptors. In Vitis vinifera (Grape), this protein is Photosystem II protein D1.